Reading from the N-terminus, the 206-residue chain is Protein GrpE (206 aa).

Polar residues predominate over residues 1–15 (MTDSNGQKDNNQDQA). The interval 1 to 38 (MTDSNGQKDNNQDQAQPADPVVSKPYIMPDDPEEGTNE) is disordered.

It belongs to the GrpE family. As to quaternary structure, homodimer.

It localises to the cytoplasm. In terms of biological role, participates actively in the response to hyperosmotic and heat shock by preventing the aggregation of stress-denatured proteins, in association with DnaK and GrpE. It is the nucleotide exchange factor for DnaK and may function as a thermosensor. Unfolded proteins bind initially to DnaJ; upon interaction with the DnaJ-bound protein, DnaK hydrolyzes its bound ATP, resulting in the formation of a stable complex. GrpE releases ADP from DnaK; ATP binding to DnaK triggers the release of the substrate protein, thus completing the reaction cycle. Several rounds of ATP-dependent interactions between DnaJ, DnaK and GrpE are required for fully efficient folding. The protein is Protein GrpE of Rhodopseudomonas palustris (strain BisB5).